Here is an 88-residue protein sequence, read N- to C-terminus: Small ribosomal subunit protein uS17 (88 aa).

The protein belongs to the universal ribosomal protein uS17 family. In terms of assembly, part of the 30S ribosomal subunit.

Functionally, one of the primary rRNA binding proteins, it binds specifically to the 5'-end of 16S ribosomal RNA. This chain is Small ribosomal subunit protein uS17, found in Lactobacillus delbrueckii subsp. bulgaricus (strain ATCC 11842 / DSM 20081 / BCRC 10696 / JCM 1002 / NBRC 13953 / NCIMB 11778 / NCTC 12712 / WDCM 00102 / Lb 14).